The following is a 283-amino-acid chain: Acetylglutamate kinase (283 aa).

Residues 64-65 (GG), Arg-86, and Asn-181 contribute to the substrate site.

The protein belongs to the acetylglutamate kinase family. ArgB subfamily.

It localises to the cytoplasm. It carries out the reaction N-acetyl-L-glutamate + ATP = N-acetyl-L-glutamyl 5-phosphate + ADP. Its pathway is amino-acid biosynthesis; L-arginine biosynthesis; N(2)-acetyl-L-ornithine from L-glutamate: step 2/4. Catalyzes the ATP-dependent phosphorylation of N-acetyl-L-glutamate. The protein is Acetylglutamate kinase of Sulfurovum sp. (strain NBC37-1).